Reading from the N-terminus, the 473-residue chain is Serine carboxypeptidase-like 42 (473 aa).

Residues 1 to 26 (MASVSWRAVAVAMVVVLLSLQWFAKG) form the signal peptide. Cystine bridges form between Cys-87–Cys-346, Cys-247–Cys-264, and Cys-289–Cys-314. An N-linked (GlcNAc...) asparagine glycan is attached at Asn-138. Residue Ser-179 is part of the active site. Residue Asn-259 is glycosylated (N-linked (GlcNAc...) asparagine). N-linked (GlcNAc...) asparagine glycosylation is found at Asn-335 and Asn-351. Catalysis depends on residues Asp-383 and His-440. Asn-465 is a glycosylation site (N-linked (GlcNAc...) asparagine).

Belongs to the peptidase S10 family. In terms of tissue distribution, expression not detected.

The protein localises to the secreted. Functionally, probable carboxypeptidase. This is Serine carboxypeptidase-like 42 (SCPL42) from Arabidopsis thaliana (Mouse-ear cress).